A 382-amino-acid chain; its full sequence is Alanine racemase (382 aa).

The active-site Proton acceptor; specific for D-alanine is Lys39. Lys39 carries the N6-(pyridoxal phosphate)lysine modification. Residue Arg138 participates in substrate binding. Tyr265 (proton acceptor; specific for L-alanine) is an active-site residue. Position 312 (Met312) interacts with substrate.

The protein belongs to the alanine racemase family. It depends on pyridoxal 5'-phosphate as a cofactor.

The catalysed reaction is L-alanine = D-alanine. The protein operates within amino-acid biosynthesis; D-alanine biosynthesis; D-alanine from L-alanine: step 1/1. Its function is as follows. Catalyzes the interconversion of L-alanine and D-alanine. May also act on other amino acids. This is Alanine racemase (alr) from Staphylococcus saprophyticus subsp. saprophyticus (strain ATCC 15305 / DSM 20229 / NCIMB 8711 / NCTC 7292 / S-41).